The chain runs to 551 residues: Probable CoA ligase CCL5 (551 aa).

Residues 204 to 212 (SSGTTGASK), 345 to 350 (QGYGLT), D431, 443 to 446 (VVDR), and K537 contribute to the ATP site. The SBD1 stretch occupies residues 274–345 (EIHEMLSAIE…ENYPTVSILQ (72 aa)). Positions 346 to 410 (GYGLTESTGI…LRGPTIMKGY (65 aa)) are SBD2.

The protein belongs to the ATP-dependent AMP-binding enzyme family. Mostly expressed at low levels in glandular trichomes (lupulin glands) after flowering, and, to a lower extent, in stems, leaves, cones and flowers.

The protein resides in the cytoplasm. The protein localises to the cytosol. In Humulus lupulus (European hop), this protein is Probable CoA ligase CCL5.